A 415-amino-acid polypeptide reads, in one-letter code: N-succinylarginine dihydrolase (415 aa).

Substrate contacts are provided by residues 18–27 (AGLSRGNIAS), asparagine 100, and 127–128 (HR). The active site involves glutamate 161. Arginine 193 provides a ligand contact to substrate. Histidine 229 is an active-site residue. Substrate is bound by residues aspartate 231 and asparagine 340. Residue cysteine 346 is the Nucleophile of the active site.

Belongs to the succinylarginine dihydrolase family. In terms of assembly, homodimer.

The enzyme catalyses N(2)-succinyl-L-arginine + 2 H2O + 2 H(+) = N(2)-succinyl-L-ornithine + 2 NH4(+) + CO2. Its pathway is amino-acid degradation; L-arginine degradation via AST pathway; L-glutamate and succinate from L-arginine: step 2/5. Catalyzes the hydrolysis of N(2)-succinylarginine into N(2)-succinylornithine, ammonia and CO(2). The sequence is that of N-succinylarginine dihydrolase from Sphingopyxis alaskensis (strain DSM 13593 / LMG 18877 / RB2256) (Sphingomonas alaskensis).